The primary structure comprises 151 residues: Transcription elongation factor GreA (151 aa).

The stretch at 41–62 (AEYHAAREKQSFIEGRIKELEA) forms a coiled coil.

The protein belongs to the GreA/GreB family.

Functionally, necessary for efficient RNA polymerase transcription elongation past template-encoded arresting sites. The arresting sites in DNA have the property of trapping a certain fraction of elongating RNA polymerases that pass through, resulting in locked ternary complexes. Cleavage of the nascent transcript by cleavage factors such as GreA or GreB allows the resumption of elongation from the new 3'terminus. GreA releases sequences of 2 to 3 nucleotides. In Cereibacter sphaeroides (strain ATCC 17023 / DSM 158 / JCM 6121 / CCUG 31486 / LMG 2827 / NBRC 12203 / NCIMB 8253 / ATH 2.4.1.) (Rhodobacter sphaeroides), this protein is Transcription elongation factor GreA.